Reading from the N-terminus, the 340-residue chain is Ferredoxin--NADP reductase (340 aa).

FAD contacts are provided by Asp33, Gln41, Tyr46, Ala86, Phe120, Asp286, and Thr327.

Belongs to the ferredoxin--NADP reductase type 2 family. Homodimer. It depends on FAD as a cofactor.

The enzyme catalyses 2 reduced [2Fe-2S]-[ferredoxin] + NADP(+) + H(+) = 2 oxidized [2Fe-2S]-[ferredoxin] + NADPH. This is Ferredoxin--NADP reductase from Rickettsia rickettsii (strain Sheila Smith).